Consider the following 338-residue polypeptide: Phenylalanine--tRNA ligase alpha subunit (338 aa).

E252 lines the Mg(2+) pocket.

Belongs to the class-II aminoacyl-tRNA synthetase family. Phe-tRNA synthetase alpha subunit type 1 subfamily. Tetramer of two alpha and two beta subunits. Mg(2+) is required as a cofactor.

The protein localises to the cytoplasm. It catalyses the reaction tRNA(Phe) + L-phenylalanine + ATP = L-phenylalanyl-tRNA(Phe) + AMP + diphosphate + H(+). In Pseudomonas syringae pv. syringae (strain B728a), this protein is Phenylalanine--tRNA ligase alpha subunit.